Here is a 25-residue protein sequence, read N- to C-terminus: Kunitz-type serine protease inhibitor 2 (25 aa).

A BPTI/Kunitz inhibitor domain is found at 6–25 (VCELPKEVGGPCRGHIIPRY).

It localises to the secreted. In terms of biological role, inhibits bovine trypsin, human plasma kallikrein and human neutrophil elastase. This chain is Kunitz-type serine protease inhibitor 2, found in Rhipicephalus microplus (Cattle tick).